The following is a 537-amino-acid chain: Eukaryotic translation initiation factor 3 subunit L (537 aa).

Positions 1–19 are enriched in basic and acidic residues; that stretch reads MSRRVEFDMSHEDHTDRRR. The interval 1–28 is disordered; it reads MSRRVEFDMSHEDHTDRRRTNTFSSEED. One can recognise a PCI domain in the interval 297-485; it reads EATKMFVNCL…GPSTVDDDEP (189 aa).

The protein belongs to the eIF-3 subunit L family. As to quaternary structure, component of the eukaryotic translation initiation factor 3 (eIF-3) complex.

The protein localises to the cytoplasm. Functionally, component of the eukaryotic translation initiation factor 3 (eIF-3) complex, which is involved in protein synthesis of a specialized repertoire of mRNAs and, together with other initiation factors, stimulates binding of mRNA and methionyl-tRNAi to the 40S ribosome. The eIF-3 complex specifically targets and initiates translation of a subset of mRNAs involved in cell proliferation. This is Eukaryotic translation initiation factor 3 subunit L from Caenorhabditis briggsae.